Reading from the N-terminus, the 802-residue chain is Osmosensitive cation channel TMEM63C (802 aa).

Residues 1–35 (MSAFPDSMDQKFHNMTVNECFQSRSTVLQGQPFGG) lie on the Extracellular side of the membrane. The chain crosses the membrane as a helical span at residues 36 to 60 (IPTVLVLNIILWVFVVLLYSFLRKA). Residues 61–124 (AWDYGRLALL…RDRDLINKCG (64 aa)) are Cytoplasmic-facing. 2 positions are modified to phosphoserine: Ser75 and Ser78. The helical transmembrane segment at 125-157 (DDARIYITFQYHLIIFVLILCIPSLGIILPVNY) threads the bilayer. The Extracellular portion of the chain corresponds to 158 to 180 (IGTVLDWNSHFGRTTIVNVSTES). A helical membrane pass occupies residues 181–205 (KFLWLHSLFAFLYFLINLAFMGHHC). The Cytoplasmic segment spans residues 206–401 (LGFVPKKSLH…IIWKHLSIRR (196 aa)). The helical transmembrane segment at 402 to 431 (FSWWTRFIAINTFLFFLFFFLTTPAIIINT) threads the bilayer. Residues 432–446 (IDIYNVTRPIEKLQS) lie on the Extracellular side of the membrane. Residues 447-476 (PIVTQFFPSVLLWAFTVTMPLLVYLSAFLE) traverse the membrane as a helical segment. Topologically, residues 477 to 480 (AHWT) are cytoplasmic. Residues 481 to 517 (RSSQNLIIVHKCYIFLVFMVVILPSMGLTSLHVFLRW) form a helical membrane-spanning segment. At 518–540 (LFDIYYLEHATIRFQCVFLPDNG) the chain is on the extracellular side. Residues 541–573 (AFFINYVITAALLGTGMELMRLGSLCTYCTRLF) traverse the membrane as a helical segment. The Cytoplasmic segment spans residues 574 to 593 (LSKSEPERVHIRKNQATDFQ). The chain crosses the membrane as a helical span at residues 594–612 (FGREYAWMLNVFSVVMAYS). At 613 to 615 (ITC) the chain is on the extracellular side. Residues 616–640 (PIIVPFGLLYLCMKHITDRYNMYYS) traverse the membrane as a helical segment. The Cytoplasmic portion of the chain corresponds to 641–647 (YAPTKLN). Residues 648–676 (AQIHMAAVYQAIFAPLLGLFWMLFFSILR) form a helical membrane-spanning segment. At 677–681 (VGSLH) the chain is on the extracellular side. A helical transmembrane segment spans residues 682 to 702 (SITLFSMSSLIISVVIAFSGV). The Cytoplasmic portion of the chain corresponds to 703–802 (FLGKLRIAQR…EGLEMEGQSH (100 aa)). The tract at residues 753 to 785 (TPASSPARHTYGTINSQPEEGEEESGLRGFARE) is disordered.

The protein belongs to the CSC1 (TC 1.A.17) family. As to quaternary structure, monomer.

It is found in the endoplasmic reticulum membrane. Its subcellular location is the cell membrane. It catalyses the reaction Ca(2+)(in) = Ca(2+)(out). In terms of biological role, acts as an osmosensitive cation channel preferentially activated upon hypotonic stress. In contrast to TMEM63B, does not show phospholipid scramblase activity. Enriched in mitochondria-ER contact sites where it may regulate the metabolite flux and organelles' morphologies in response to osmotic changes. In particular may regulate mitochondrial motility and function in motor neuron axons. Required for the functional integrity of the kidney glomerular filtration barrier. This Mus musculus (Mouse) protein is Osmosensitive cation channel TMEM63C.